The primary structure comprises 183 residues: Phosphinothricin N-acetyltransferase (183 aa).

Positions 8–169 (VEIRPATAAD…DVGFWQRDFE (162 aa)) constitute an N-acetyltransferase domain. Residues 91-93 (VYV), 99-104 (RLGLGS), and Asn-130 each bind acetyl-CoA.

The protein belongs to the acetyltransferase family. PAT/BAR subfamily.

The catalysed reaction is phosphinothricin + acetyl-CoA = N-acetylphosphinothricin + CoA + H(+). Inactivates phosphinothricin (PPT) by transfer of an acetyl group from acetyl CoA. This enzyme is an effector of phosphinothricin tripeptide (PTT or bialaphos) resistance. This chain is Phosphinothricin N-acetyltransferase, found in Streptomyces viridochromogenes (strain DSM 40736 / JCM 4977 / BCRC 1201 / Tue 494).